A 684-amino-acid chain; its full sequence is UvrABC system protein B (684 aa).

The 389-residue stretch at 32 to 420 (DGVLRGDRWQ…GGVVVEQLIR (389 aa)) folds into the Helicase ATP-binding domain. 45-52 (GVTGSGKT) contributes to the ATP binding site. The short motif at 98–121 (YYDFYQPEAYIPSLDKYIAKDLKI) is the Beta-hairpin element. One can recognise a Helicase C-terminal domain in the interval 437–603 (QIDHLLARIR…SIIKSVDQVL (167 aa)). In terms of domain architecture, UVR spans 643–678 (MLMVAEMNAEMQKAAEQTDYEKAAYLRDEILMLQER).

This sequence belongs to the UvrB family. As to quaternary structure, forms a heterotetramer with UvrA during the search for lesions. Interacts with UvrC in an incision complex.

Its subcellular location is the cytoplasm. Functionally, the UvrABC repair system catalyzes the recognition and processing of DNA lesions. A damage recognition complex composed of 2 UvrA and 2 UvrB subunits scans DNA for abnormalities. Upon binding of the UvrA(2)B(2) complex to a putative damaged site, the DNA wraps around one UvrB monomer. DNA wrap is dependent on ATP binding by UvrB and probably causes local melting of the DNA helix, facilitating insertion of UvrB beta-hairpin between the DNA strands. Then UvrB probes one DNA strand for the presence of a lesion. If a lesion is found the UvrA subunits dissociate and the UvrB-DNA preincision complex is formed. This complex is subsequently bound by UvrC and the second UvrB is released. If no lesion is found, the DNA wraps around the other UvrB subunit that will check the other stand for damage. The chain is UvrABC system protein B from Chlorobaculum tepidum (strain ATCC 49652 / DSM 12025 / NBRC 103806 / TLS) (Chlorobium tepidum).